Consider the following 984-residue polypeptide: Probable serine/threonine-protein kinase ireA (984 aa).

The N-terminal stretch at 1–26 (MTFSKTRNKIIFLLFLIIINIFNINA) is a signal peptide. Over 27–436 (YIKDENEDDL…NDLLDSNKLK (410 aa)) the chain is Extracellular. 2 disordered regions span residues 70–91 (YSTS…EITK) and 137–157 (EDKS…DENK). Low complexity-rich tracts occupy residues 82-91 (STSTSTEITK) and 141-150 (STSSTSTTSE). An N-linked (GlcNAc...) asparagine glycan is attached at Asn228. A disordered region spans residues 352-427 (SPPSNNNNNN…GANNNNNNNN (76 aa)). Residues 356–397 (NNNNNNNNNNNNNNNNNNNNNNNNNNNNNNNNNNKNNNNNNK) show a composition bias toward low complexity. Residue Asn398 is glycosylated (N-linked (GlcNAc...) asparagine). Residues 437–457 (NYDIYLYSSIVILITSIIVFI) traverse the membrane as a helical segment. Residues 458 to 984 (RSKKNFNLIN…NDQYFVQYYY (527 aa)) are Cytoplasmic-facing. A coiled-coil region spans residues 467–533 (NVNNNNNQNN…NDLIDEFIST (67 aa)). A compositionally biased stretch (low complexity) spans 472–489 (NNQNNNQNSNQNNNINNK). A disordered region spans residues 472–518 (NNQNNNQNSNQNNNINNKKTPKKKKKKQKNKNNKNNNDEDDENEIEN). Over residues 490-503 (KTPKKKKKKQKNKN) the composition is skewed to basic residues. Positions 509 to 518 (DEDDENEIEN) are enriched in acidic residues. Residues 575–851 (IITNKILGTG…IGECINHPFF (277 aa)) enclose the Protein kinase domain. Residues 581–589 (LGTGSCGTI) and Lys603 contribute to the ATP site. Over residues 667–676 (PTDSPSIQSS) the composition is skewed to polar residues. The interval 667 to 692 (PTDSPSIQSSNNNGNGNNGNNNNNNQ) is disordered. Over residues 677–691 (NNNGNGNNGNNNNNN) the composition is skewed to low complexity. The active-site Proton acceptor is Asp722. The KEN domain occupies 854–984 (VHKKLSFLVA…NDQYFVQYYY (131 aa)).

This sequence belongs to the protein kinase superfamily. Ser/Thr protein kinase family.

The protein localises to the membrane. The catalysed reaction is L-seryl-[protein] + ATP = O-phospho-L-seryl-[protein] + ADP + H(+). The enzyme catalyses L-threonyl-[protein] + ATP = O-phospho-L-threonyl-[protein] + ADP + H(+). This Dictyostelium discoideum (Social amoeba) protein is Probable serine/threonine-protein kinase ireA (ireA).